Consider the following 333-residue polypeptide: Adenosine deaminase (333 aa).

Zn(2+) is bound by residues histidine 12 and histidine 14. Residues histidine 14, aspartate 16, and glycine 170 each coordinate substrate. Zn(2+) is bound at residue histidine 197. Glutamate 200 serves as the catalytic Proton donor. Zn(2+) is bound at residue aspartate 278. Substrate is bound at residue aspartate 279.

This sequence belongs to the metallo-dependent hydrolases superfamily. Adenosine and AMP deaminases family. Adenosine deaminase subfamily. Zn(2+) is required as a cofactor.

It catalyses the reaction adenosine + H2O + H(+) = inosine + NH4(+). The catalysed reaction is 2'-deoxyadenosine + H2O + H(+) = 2'-deoxyinosine + NH4(+). In terms of biological role, catalyzes the hydrolytic deamination of adenosine and 2-deoxyadenosine. This Escherichia coli O139:H28 (strain E24377A / ETEC) protein is Adenosine deaminase.